The sequence spans 268 residues: Bidirectional sugar transporter N3 (268 aa).

At 1-7 (MAISHNT) the chain is on the extracellular side. The chain crosses the membrane as a helical span at residues 8–28 (LAFTFGMLGNVISFLVFLAPI). The 87-residue stretch at 10–96 (FTFGMLGNVI…ILYIIYAPRD (87 aa)) folds into the MtN3/slv 1 domain. The Cytoplasmic portion of the chain corresponds to 29–42 (STFYRIYKKKSTEG). A helical transmembrane segment spans residues 43 to 63 (FQSLPYLVALFSSMLWLYYAL). At 64–70 (LKKDAFL) the chain is on the extracellular side. A helical membrane pass occupies residues 71–91 (LITINSFGCVVETIYIILYII). Topologically, residues 92 to 103 (YAPRDARNLTFK) are cytoplasmic. Residues 104 to 124 (LLSAMNVGSFALILIVTNYAV) traverse the membrane as a helical segment. Over 125 to 131 (HGPLRVQ) the chain is Extracellular. In terms of domain architecture, MtN3/slv 2 spans 131 to 214 (QVLGWVCVSL…QMLLYAIYRN (84 aa)). A helical transmembrane segment spans residues 132–152 (VLGWVCVSLSVSVFAAPLSIV). At 153-165 (AQVVRTKSVEFMP) the chain is on the cytoplasmic side. Residues 166-186 (FNLSFTLTLSATMWFGYGFFL) traverse the membrane as a helical segment. The Extracellular portion of the chain corresponds to 187 to 190 (KDIC). A helical transmembrane segment spans residues 191–211 (IXLPNVLGXVLGLLQMLLYAI). Over 212-268 (YRNGGEKAMKKEKKAPIEPPKSIVIETQLEKIEQEKKNKDDDNEEKDKSEEPIGCGV) the chain is Cytoplasmic. The stretch at 234–262 (IVIETQLEKIEQEKKNKDDDNEEKDKSEE) forms a coiled coil. The segment covering 243–262 (IEQEKKNKDDDNEEKDKSEE) has biased composition (basic and acidic residues). The disordered stretch occupies residues 243-268 (IEQEKKNKDDDNEEKDKSEEPIGCGV).

It belongs to the SWEET sugar transporter family. Forms homooligomers and/or heterooligomers.

Its subcellular location is the cell membrane. In terms of biological role, mediates both low-affinity uptake and efflux of sugar across the plasma membrane. In Medicago truncatula (Barrel medic), this protein is Bidirectional sugar transporter N3 (N3).